Consider the following 443-residue polypeptide: MLRQSDFKIAIVGAGPAGLTLASRLTASSHSFDFTVFERRDKPDPSQVSVPCANLDLHRELGLRAIKGCGLYPQFLEVQSACTEQTRILDITGTVLSDTTGDGERPEISRNALIQLLLESIPEERIRWNTKVLDITPANCSRSKGKECLRFTDTSIATTPISEEIYDLIVGADGAWSRIRAAIPNAPKPIYSGVCYMTMYLRISREQYPDMDNMIGSGTFAVVGDNKLLLAQRAIHGTLRVCLFLHSKCLAAVRKELLASMHNHNTGPCPLLNPDDLINSLPSNPKTLQELLLTHDDFFASWSEDIKRLLRIAFESQVADAEIITRPMYMLPLVPYPYAHQRGIALVGDAASLMTPFAGRGVNVAMADSLDLAEELERLHLVTVSSSASTPAAIFADKLEGALSAYERTAYTRAKDAMELTWRNLCLSFSEKASDLFAAVMAS.

It belongs to the aromatic-ring hydroxylase family. FAD serves as cofactor.

The protein operates within secondary metabolite biosynthesis. It participates in alkaloid biosynthesis. Its pathway is mycotoxin biosynthesis. Functionally, monooxygenase; part of the gene cluster that mediates the biosynthesis of the aspoquinolone mycotoxins. The role of asqM within the aspoquinolone pathway has still to be determined. The first step of the pathway is catalyzed by the nonribosomal peptide synthetase asqK that condenses anthranilic acid and O-methyl-L-tyrosine to produce 4'-methoxycyclopeptin. 4'-methoxycyclopeptin is then converted to 4'-methoxydehydrocyclopeptin by the ketoglutarate-dependent dioxygenase asqJ. AsqJ also converts its first product 4'-methoxydehydrocyclopeptin to 4'-methoxycyclopenin. The following conversion of 4'-methoxycyclopenin into 4'-methoxyviridicatin is catalyzed by the cyclopenase asqI. 4'-methoxyviridicatin is the precursor of quinolone natural products, and is further converted to quinolinone B. The prenyltransferase asqH1 then catalyzes the canonical Friedel-Crafts alkylation of quinolinone B with dimethylallyl cation to yield dimethylallyl quinolone, which is subjected to FAD-dependent dehydrogenation by the FAD-linked oxidoreductase asqF to yield conjugated aryl diene. The delta(3') double bond then serves as the site of the second alkylation with DMAPP catalyzed by the prenyltransferase asqH2 to yield a carbenium ion intermediate, which can be attacked by H(2)O to yield a styrenyl quinolone containing a C3'-hydroxyprenyl chain. The FAD-dependent monooxygenase asqG performs epoxidation of the terminal C7'-C8' olefin. Finally, after dehydratation of the epoxide at C3 by asqC, the quinolone epoxide rearrangement protein asqO catalyzes an enzymatic 3-exo-tet cyclization to yield the cyclopropyl-THF ring system in aspoquinolone. The chain is Monooxygenase asqM from Emericella nidulans (strain FGSC A4 / ATCC 38163 / CBS 112.46 / NRRL 194 / M139) (Aspergillus nidulans).